A 386-amino-acid polypeptide reads, in one-letter code: Coproporphyrinogen-III oxidase 1, chloroplastic (386 aa).

A chloroplast-targeting transit peptide spans 1-48 (MASHSSTLLSSPTFAPFSSHRLHYSPNPSTLRFSRPIRNKPNLALRCS). Residues 125 to 134 (VLQDGNVFEK) are important for dimerization. Ser174 contributes to the substrate binding site. Residue His188 is the Proton donor of the active site. Substrate contacts are provided by residues 190 to 192 (NYR) and 344 to 349 (GGRIES). Residues 326-361 (YVEFNLVYDRGTTFGLKTGGRIESILVSLPLSARWE) are important for dimerization.

Belongs to the aerobic coproporphyrinogen-III oxidase family. In terms of assembly, homodimer. In terms of tissue distribution, expressed in cotyledons, leaves and roots.

The protein localises to the plastid. It is found in the chloroplast. The catalysed reaction is coproporphyrinogen III + O2 + 2 H(+) = protoporphyrinogen IX + 2 CO2 + 2 H2O. Its pathway is porphyrin-containing compound metabolism; protoporphyrin-IX biosynthesis; protoporphyrinogen-IX from coproporphyrinogen-III (O2 route): step 1/1. It functions in the pathway porphyrin-containing compound metabolism; chlorophyll biosynthesis. Key enzyme in heme biosynthesis. Catalyzes the oxidative decarboxylation of propionic acid side chains of rings A and B of coproporphyrinogen III. This is Coproporphyrinogen-III oxidase 1, chloroplastic (CPX1) from Arabidopsis thaliana (Mouse-ear cress).